The following is a 380-amino-acid chain: Glucose-1-phosphate adenylyltransferase (380 aa).

Residues tyrosine 100, glycine 165, 180 to 181, and serine 191 each bind alpha-D-glucose 1-phosphate; that span reads EK.

This sequence belongs to the bacterial/plant glucose-1-phosphate adenylyltransferase family. Homotetramer.

It catalyses the reaction alpha-D-glucose 1-phosphate + ATP + H(+) = ADP-alpha-D-glucose + diphosphate. It functions in the pathway glycan biosynthesis; glycogen biosynthesis. Involved in the biosynthesis of ADP-glucose, a building block required for the elongation reactions to produce glycogen. Catalyzes the reaction between ATP and alpha-D-glucose 1-phosphate (G1P) to produce pyrophosphate and ADP-Glc. The protein is Glucose-1-phosphate adenylyltransferase of Clostridium acetobutylicum (strain ATCC 824 / DSM 792 / JCM 1419 / IAM 19013 / LMG 5710 / NBRC 13948 / NRRL B-527 / VKM B-1787 / 2291 / W).